A 41-amino-acid chain; its full sequence is Large ribosomal subunit protein bL36 (41 aa).

This sequence belongs to the bacterial ribosomal protein bL36 family.

This chain is Large ribosomal subunit protein bL36, found in Ruegeria pomeroyi (strain ATCC 700808 / DSM 15171 / DSS-3) (Silicibacter pomeroyi).